Here is a 170-residue protein sequence, read N- to C-terminus: J domain-containing protein (170 aa).

The J domain occupies 17-82; the sequence is DYYALLGCDE…SKRALYDKWR (66 aa). The tract at residues 101 to 170 is disordered; the sequence is QQSMHWSKPN…VLSKFRNYEI (70 aa). The span at 110-120 shows a compositional bias: basic and acidic residues; the sequence is NTKDRMLEGDG. Low complexity predominate over residues 121-134; sequence SKPSGPSSLGPSNP.

This Bombyx mori (Silk moth) protein is J domain-containing protein (jdp).